Here is a 433-residue protein sequence, read N- to C-terminus: Adenylosuccinate synthetase (433 aa).

GTP contacts are provided by residues 11 to 17 (GDEGKGK) and 39 to 41 (GHT). The active-site Proton acceptor is D12. The Mg(2+) site is built by D12 and G39. IMP contacts are provided by residues 12 to 15 (DEGK), 37 to 40 (NAGH), T134, R148, N230, T245, and R309. The active-site Proton donor is H40. 305-311 (VTTGRKR) contributes to the substrate binding site. GTP is bound by residues R311, 337 to 339 (KLD), and 419 to 421 (GTG).

This sequence belongs to the adenylosuccinate synthetase family. Homodimer. Requires Mg(2+) as cofactor.

The protein resides in the cytoplasm. The enzyme catalyses IMP + L-aspartate + GTP = N(6)-(1,2-dicarboxyethyl)-AMP + GDP + phosphate + 2 H(+). The protein operates within purine metabolism; AMP biosynthesis via de novo pathway; AMP from IMP: step 1/2. Its function is as follows. Plays an important role in the de novo pathway and in the salvage pathway of purine nucleotide biosynthesis. Catalyzes the first committed step in the biosynthesis of AMP from IMP. The chain is Adenylosuccinate synthetase from Saccharomyces cerevisiae (strain JAY291) (Baker's yeast).